A 457-amino-acid polypeptide reads, in one-letter code: Siroheme synthase (457 aa).

Positions 1 to 204 (MDHLPIFCQL…ADEKAVNATT (204 aa)) are precorrin-2 dehydrogenase /sirohydrochlorin ferrochelatase. NAD(+) contacts are provided by residues 22–23 (DV) and 43–44 (LT). Serine 128 is subject to Phosphoserine. The tract at residues 216–457 (GEVVLVGAGP…RDKLNWFSSH (242 aa)) is uroporphyrinogen-III C-methyltransferase. Proline 225 contacts S-adenosyl-L-methionine. Aspartate 248 functions as the Proton acceptor in the catalytic mechanism. Lysine 270 (proton donor) is an active-site residue. S-adenosyl-L-methionine-binding positions include 301-303 (GGD), isoleucine 306, 331-332 (TA), methionine 382, and glycine 411.

It in the N-terminal section; belongs to the precorrin-2 dehydrogenase / sirohydrochlorin ferrochelatase family. This sequence in the C-terminal section; belongs to the precorrin methyltransferase family.

It carries out the reaction uroporphyrinogen III + 2 S-adenosyl-L-methionine = precorrin-2 + 2 S-adenosyl-L-homocysteine + H(+). The enzyme catalyses precorrin-2 + NAD(+) = sirohydrochlorin + NADH + 2 H(+). It catalyses the reaction siroheme + 2 H(+) = sirohydrochlorin + Fe(2+). It participates in cofactor biosynthesis; adenosylcobalamin biosynthesis; precorrin-2 from uroporphyrinogen III: step 1/1. It functions in the pathway cofactor biosynthesis; adenosylcobalamin biosynthesis; sirohydrochlorin from precorrin-2: step 1/1. Its pathway is porphyrin-containing compound metabolism; siroheme biosynthesis; precorrin-2 from uroporphyrinogen III: step 1/1. The protein operates within porphyrin-containing compound metabolism; siroheme biosynthesis; siroheme from sirohydrochlorin: step 1/1. It participates in porphyrin-containing compound metabolism; siroheme biosynthesis; sirohydrochlorin from precorrin-2: step 1/1. In terms of biological role, multifunctional enzyme that catalyzes the SAM-dependent methylations of uroporphyrinogen III at position C-2 and C-7 to form precorrin-2 via precorrin-1. Then it catalyzes the NAD-dependent ring dehydrogenation of precorrin-2 to yield sirohydrochlorin. Finally, it catalyzes the ferrochelation of sirohydrochlorin to yield siroheme. The protein is Siroheme synthase of Salmonella arizonae (strain ATCC BAA-731 / CDC346-86 / RSK2980).